A 339-amino-acid polypeptide reads, in one-letter code: Isopentenyl-diphosphate delta-isomerase (339 aa).

7–8 (RK) is a substrate binding site. FMN is bound by residues serine 65, 66-68 (SMT), serine 96, and asparagine 125. A substrate-binding site is contributed by 96–98 (SQR). Substrate is bound at residue glutamine 160. Glutamate 161 contacts Mg(2+). FMN is bound by residues lysine 192, threonine 222, and 293–294 (AG).

Belongs to the IPP isomerase type 2 family. Homooctamer. Dimer of tetramers. It depends on FMN as a cofactor. Requires NADPH as cofactor. Mg(2+) serves as cofactor.

The protein resides in the cytoplasm. It catalyses the reaction isopentenyl diphosphate = dimethylallyl diphosphate. Involved in the biosynthesis of isoprenoids. Catalyzes the 1,3-allylic rearrangement of the homoallylic substrate isopentenyl (IPP) to its allylic isomer, dimethylallyl diphosphate (DMAPP). This Vibrio parahaemolyticus serotype O3:K6 (strain RIMD 2210633) protein is Isopentenyl-diphosphate delta-isomerase.